A 474-amino-acid polypeptide reads, in one-letter code: tRNA-2-methylthio-N(6)-dimethylallyladenosine synthase (474 aa).

Residues Gln-3 to Gly-120 enclose the MTTase N-terminal domain. The [4Fe-4S] cluster site is built by Cys-12, Cys-49, Cys-83, Cys-157, Cys-161, and Cys-164. Positions Lys-143–Lys-375 constitute a Radical SAM core domain. One can recognise a TRAM domain in the interval Arg-378 to Arg-441.

It belongs to the methylthiotransferase family. MiaB subfamily. In terms of assembly, monomer. Requires [4Fe-4S] cluster as cofactor.

It localises to the cytoplasm. It catalyses the reaction N(6)-dimethylallyladenosine(37) in tRNA + (sulfur carrier)-SH + AH2 + 2 S-adenosyl-L-methionine = 2-methylsulfanyl-N(6)-dimethylallyladenosine(37) in tRNA + (sulfur carrier)-H + 5'-deoxyadenosine + L-methionine + A + S-adenosyl-L-homocysteine + 2 H(+). Catalyzes the methylthiolation of N6-(dimethylallyl)adenosine (i(6)A), leading to the formation of 2-methylthio-N6-(dimethylallyl)adenosine (ms(2)i(6)A) at position 37 in tRNAs that read codons beginning with uridine. This Actinobacillus succinogenes (strain ATCC 55618 / DSM 22257 / CCUG 43843 / 130Z) protein is tRNA-2-methylthio-N(6)-dimethylallyladenosine synthase.